The primary structure comprises 244 residues: 27 kDa core protein (244 aa).

Belongs to the chordopoxvirinae D3 family.

It is found in the virion. In terms of biological role, late protein which is part of a large complex required for early virion morphogenesis. This complex participates in the formation of virosomes and the incorporation of virosomal contents into nascent immature virions. This is 27 kDa core protein from Swinepox virus (strain Swine/Nebraska/17077-99/1999) (SWPV).